Consider the following 74-residue polypeptide: Large ribosomal subunit protein uL29 (74 aa).

This sequence belongs to the universal ribosomal protein uL29 family.

The polypeptide is Large ribosomal subunit protein uL29 (Streptomyces avermitilis (strain ATCC 31267 / DSM 46492 / JCM 5070 / NBRC 14893 / NCIMB 12804 / NRRL 8165 / MA-4680)).